A 468-amino-acid polypeptide reads, in one-letter code: Peroxisome proliferator-activated receptor alpha (468 aa).

The nuclear receptor DNA-binding region spans N99 to F173. 2 NR C4-type zinc fingers span residues C102–C122 and C139–C161. An NR LBD domain is found at F239–D466. The segment at D304 to L433 is required for heterodimerization with RXRA.

The protein belongs to the nuclear hormone receptor family. NR1 subfamily. Heterodimer; with RXRA. This heterodimerization is required for DNA binding and transactivation activity. Interacts with NCOA3 coactivator. Interacts with CITED2; the interaction stimulates its transcriptional activity. Also interacts with PPARBP in vitro. Interacts with AKAP13, LPIN1, PRDM16 and coactivator NCOA6. Interacts with ASXL1 and ASXL2. Interacts with PER2. Interacts with SIRT1; the interaction seems to be modulated by NAD(+) levels. Interacts with CRY1 and CRY2. In hepatocytes, interacts with PAQR3 and HUWE1; the interactions promote PPARA poylubiquitination and HUWE1-mediated degradation. Ubiquitinated by E3 ubiquitin-protein ligase HUWE1; leading to proteasomal degradation. Post-translationally, phosphorylated. As to expression, highly expressed in liver, kidney and heart. Very weakly expressed in brain and testis.

The protein localises to the nucleus. Its function is as follows. Ligand-activated transcription factor. Key regulator of lipid metabolism. Activated by the endogenous ligand 1-palmitoyl-2-oleoyl-sn-glycerol-3-phosphocholine (16:0/18:1-GPC). Activated by oleylethanolamide, a naturally occurring lipid that regulates satiety. Receptor for peroxisome proliferators such as hypolipidemic drugs and fatty acids. Regulates the peroxisomal beta-oxidation pathway of fatty acids. Functions as a transcription activator for the ACOX1 and P450 genes. Transactivation activity requires heterodimerization with RXRA and is antagonized by NR2C2. May be required for the propagation of clock information to metabolic pathways regulated by PER2. This chain is Peroxisome proliferator-activated receptor alpha (Ppara), found in Mus musculus (Mouse).